A 424-amino-acid chain; its full sequence is Histidine--tRNA ligase (424 aa).

It belongs to the class-II aminoacyl-tRNA synthetase family. As to quaternary structure, homodimer.

The protein localises to the cytoplasm. It carries out the reaction tRNA(His) + L-histidine + ATP = L-histidyl-tRNA(His) + AMP + diphosphate + H(+). The protein is Histidine--tRNA ligase of Shigella dysenteriae serotype 1 (strain Sd197).